The sequence spans 673 residues: Ion-translocating oxidoreductase complex subunit C (673 aa).

2 consecutive 4Fe-4S ferredoxin-type domains span residues 368 to 397 (MGAPQEETSCIRCSACADACPADLLPQQLY) and 407 to 436 (KATAHHIADCIECGACAWVCPSNIPLVQYF). Residues C377, C380, C383, C387, C416, C419, C422, and C426 each coordinate [4Fe-4S] cluster. Residues 529 to 554 (EARKAQARAKQAGHPMADSATSGDDP) form a disordered region.

It belongs to the 4Fe4S bacterial-type ferredoxin family. RnfC subfamily. In terms of assembly, the complex is composed of six subunits: RsxA, RsxB, RsxC, RsxD, RsxE and RsxG. The cofactor is [4Fe-4S] cluster.

Its subcellular location is the cell inner membrane. Part of a membrane-bound complex that couples electron transfer with translocation of ions across the membrane. Required to maintain the reduced state of SoxR. This Salmonella arizonae (strain ATCC BAA-731 / CDC346-86 / RSK2980) protein is Ion-translocating oxidoreductase complex subunit C.